Consider the following 713-residue polypeptide: Polyribonucleotide nucleotidyltransferase (713 aa).

Mg(2+) is bound by residues Asp485 and Asp491. A KH domain is found at 552-611 (PRIYTMKIDPKKIKDVIGKGGATVRSLTEETGTSIDIDDDGTVKIAAVDKNAVQEVMSRI). In terms of domain architecture, S1 motif spans 621 to 689 (GVVYKGKVTR…RQGRIRLTMK (69 aa)). The disordered stretch occupies residues 694–713 (DQTKNEENLLQSEEGSPVQE). Positions 701-713 (NLLQSEEGSPVQE) are enriched in polar residues.

The protein belongs to the polyribonucleotide nucleotidyltransferase family. Component of the RNA degradosome, which is a multiprotein complex involved in RNA processing and mRNA degradation. Requires Mg(2+) as cofactor.

It localises to the cytoplasm. The enzyme catalyses RNA(n+1) + phosphate = RNA(n) + a ribonucleoside 5'-diphosphate. In terms of biological role, involved in mRNA degradation. Catalyzes the phosphorolysis of single-stranded polyribonucleotides processively in the 3'- to 5'-direction. The polypeptide is Polyribonucleotide nucleotidyltransferase (Histophilus somni (strain 2336) (Haemophilus somnus)).